Here is an 88-residue protein sequence, read N- to C-terminus: Small ribosomal subunit protein uS15 (88 aa).

Positions 1 to 20 (MLTTQDKQNIIKENQQSEGD) are enriched in polar residues. Residues 1 to 24 (MLTTQDKQNIIKENQQSEGDTGSP) are disordered.

This sequence belongs to the universal ribosomal protein uS15 family. Part of the 30S ribosomal subunit. Forms a bridge to the 50S subunit in the 70S ribosome, contacting the 23S rRNA.

One of the primary rRNA binding proteins, it binds directly to 16S rRNA where it helps nucleate assembly of the platform of the 30S subunit by binding and bridging several RNA helices of the 16S rRNA. Its function is as follows. Forms an intersubunit bridge (bridge B4) with the 23S rRNA of the 50S subunit in the ribosome. This chain is Small ribosomal subunit protein uS15, found in Francisella philomiragia subsp. philomiragia (strain ATCC 25017 / CCUG 19701 / FSC 153 / O#319-036).